The sequence spans 792 residues: Kinesin-like protein KIF3C (792 aa).

In terms of domain architecture, Kinesin motor spans 10 to 363 (ALKVVARCRP…LRFANRAKNI (354 aa)). 97–104 (GQTGTGKT) contributes to the ATP binding site. Disordered stretches follow at residues 249-287 (GSERQNKAGPNTTGGTATQPTGGGGGGGGGGGGGERPKE), 397-418 (MLGKRLRRKSSRRKKAVSAPAG), and 749-792 (RPST…LDHE). Low complexity predominate over residues 257–268 (GPNTTGGTATQP). Over residues 269-282 (TGGGGGGGGGGGGG) the composition is skewed to gly residues. Positions 374-627 (KDTLLREFQE…QNEQTRELKL (254 aa)) form a coiled coil. Residues 397-412 (MLGKRLRRKSSRRKKA) show a composition bias toward basic residues. Residues 628–792 (KYLIIENFIP…LRPTTVLDHE (165 aa)) form a globular region. Low complexity predominate over residues 773–792 (AHASLAASAALRPTTVLDHE).

It belongs to the TRAFAC class myosin-kinesin ATPase superfamily. Kinesin family. Kinesin II subfamily. Heterodimer of KIF3A and KIF3C.

The protein localises to the cytoplasm. The protein resides in the cytoskeleton. Microtubule-based anterograde translocator for membranous organelles. This Bos taurus (Bovine) protein is Kinesin-like protein KIF3C (KIF3C).